We begin with the raw amino-acid sequence, 251 residues long: DNA repair protein RecO (251 aa).

It belongs to the RecO family.

Involved in DNA repair and RecF pathway recombination. The sequence is that of DNA repair protein RecO from Staphylococcus saprophyticus subsp. saprophyticus (strain ATCC 15305 / DSM 20229 / NCIMB 8711 / NCTC 7292 / S-41).